The primary structure comprises 162 residues: ATP synthase subunit delta, mitochondrial (162 aa).

The transit peptide at 1–25 (MSSLRLLASAARRATTHVAYTRRGY) directs the protein to the mitochondrion.

The protein belongs to the ATPase epsilon chain family. As to quaternary structure, F-type ATPases have 2 components, CF(1) - the catalytic core - and CF(0) - the membrane proton channel. CF(1) has five subunits: alpha(3), beta(3), gamma(1), delta(1), epsilon(1). CF(0) has three main subunits: a, b and c.

Its subcellular location is the mitochondrion. The protein localises to the mitochondrion inner membrane. In terms of biological role, mitochondrial membrane ATP synthase (F(1)F(0) ATP synthase or Complex V) produces ATP from ADP in the presence of a proton gradient across the membrane which is generated by electron transport complexes of the respiratory chain. F-type ATPases consist of two structural domains, F(1) - containing the extramembraneous catalytic core, and F(0) - containing the membrane proton channel, linked together by a central stalk and a peripheral stalk. During catalysis, ATP turnover in the catalytic domain of F(1) is coupled via a rotary mechanism of the central stalk subunits to proton translocation. Part of the complex F(1) domain and of the central stalk which is part of the complex rotary element. Rotation of the central stalk against the surrounding alpha(3)beta(3) subunits leads to hydrolysis of ATP in three separate catalytic sites on the beta subunits. The polypeptide is ATP synthase subunit delta, mitochondrial (atpD) (Agaricus bisporus (White button mushroom)).